The following is a 788-amino-acid chain: Endonuclease MutS2 (788 aa).

335-342 (GPNTGGKT) is a binding site for ATP. Positions 688-708 (VKSASKTKKRSGGTSITKQSA) are disordered. Residues 699–708 (GGTSITKQSA) show a composition bias toward polar residues. In terms of domain architecture, Smr spans 713 to 788 (LDLRGVRVEE…GHGVTIIELK (76 aa)).

The protein belongs to the DNA mismatch repair MutS family. MutS2 subfamily. As to quaternary structure, homodimer. Binds to stalled ribosomes, contacting rRNA.

Its function is as follows. Endonuclease that is involved in the suppression of homologous recombination and thus may have a key role in the control of bacterial genetic diversity. Acts as a ribosome collision sensor, splitting the ribosome into its 2 subunits. Detects stalled/collided 70S ribosomes which it binds and splits by an ATP-hydrolysis driven conformational change. Acts upstream of the ribosome quality control system (RQC), a ribosome-associated complex that mediates the extraction of incompletely synthesized nascent chains from stalled ribosomes and their subsequent degradation. Probably generates substrates for RQC. The sequence is that of Endonuclease MutS2 from Exiguobacterium sibiricum (strain DSM 17290 / CCUG 55495 / CIP 109462 / JCM 13490 / 255-15).